Consider the following 246-residue polypeptide: 1-(5-phosphoribosyl)-5-[(5-phosphoribosylamino)methylideneamino] imidazole-4-carboxamide isomerase (246 aa).

Asp-8 acts as the Proton acceptor in catalysis. Asp-130 acts as the Proton donor in catalysis.

It belongs to the HisA/HisF family.

It is found in the cytoplasm. The enzyme catalyses 1-(5-phospho-beta-D-ribosyl)-5-[(5-phospho-beta-D-ribosylamino)methylideneamino]imidazole-4-carboxamide = 5-[(5-phospho-1-deoxy-D-ribulos-1-ylimino)methylamino]-1-(5-phospho-beta-D-ribosyl)imidazole-4-carboxamide. It functions in the pathway amino-acid biosynthesis; L-histidine biosynthesis; L-histidine from 5-phospho-alpha-D-ribose 1-diphosphate: step 4/9. The protein is 1-(5-phosphoribosyl)-5-[(5-phosphoribosylamino)methylideneamino] imidazole-4-carboxamide isomerase of Alcanivorax borkumensis (strain ATCC 700651 / DSM 11573 / NCIMB 13689 / SK2).